The primary structure comprises 288 residues: ATP synthase subunit a (288 aa).

Transmembrane regions (helical) follow at residues L47 to V67, L104 to L124, D157 to I177, P199 to A219, L237 to W257, and A258 to V278.

It belongs to the ATPase A chain family. In terms of assembly, F-type ATPases have 2 components, CF(1) - the catalytic core - and CF(0) - the membrane proton channel. CF(1) has five subunits: alpha(3), beta(3), gamma(1), delta(1), epsilon(1). CF(0) has three main subunits: a(1), b(2) and c(9-12). The alpha and beta chains form an alternating ring which encloses part of the gamma chain. CF(1) is attached to CF(0) by a central stalk formed by the gamma and epsilon chains, while a peripheral stalk is formed by the delta and b chains.

The protein resides in the cell inner membrane. Its function is as follows. Key component of the proton channel; it plays a direct role in the translocation of protons across the membrane. This chain is ATP synthase subunit a, found in Psychrobacter arcticus (strain DSM 17307 / VKM B-2377 / 273-4).